Here is a 222-residue protein sequence, read N- to C-terminus: MKEETTTTTTTTTTKNTTKIIRNEDDDYELVKVIILGDNKTGKSSILRRYHYNEFELGVSSIGVDFIKKDYGMVNGKYYKIQIWDVNSCDRFRLLTHSYYKGAHGFMLLYDCTNQESFNNLQFWINEIINKSPNSNNSTIVIIGNKCDLVNGIKIDPIKSKQFCDSKSITSFQNVSAKDSININEPFEILFRQIIKKGHSQTVSPKHDTYENNNINKSCNIL.

37–44 provides a ligand contact to GTP; sequence GDNKTGKS. Positions 59-66 match the Effector region motif; sequence VSSIGVDF. GTP-binding positions include 85–89 and 145–148; these read DVNSC and NKCD. Cysteine methyl ester is present on cysteine 219. Cysteine 219 carries S-geranylgeranyl cysteine lipidation. The propeptide at 220 to 222 is removed in mature form; that stretch reads NIL.

Belongs to the small GTPase superfamily. Rab family.

The protein localises to the cell membrane. This is Ras-related protein RabT1 (rabT1) from Dictyostelium discoideum (Social amoeba).